Reading from the N-terminus, the 209-residue chain is Small ribosomal subunit protein uS3 (209 aa).

The KH type-2 domain occupies 38-107 (IRKIIKNKYY…RVVINIEEIK (70 aa)).

It belongs to the universal ribosomal protein uS3 family. Part of the 30S ribosomal subunit. Forms a tight complex with proteins S10 and S14.

Functionally, binds the lower part of the 30S subunit head. Binds mRNA in the 70S ribosome, positioning it for translation. This chain is Small ribosomal subunit protein uS3, found in Thermotoga maritima (strain ATCC 43589 / DSM 3109 / JCM 10099 / NBRC 100826 / MSB8).